A 358-amino-acid polypeptide reads, in one-letter code: Plastoglobulin-1, chloroplastic (358 aa).

The N-terminal 47 residues, 1 to 47 (MALLSSTLRAPLVFSKNPKPVSLSSLHSRIYLSPRSPRFPSLRFISA), are a transit peptide targeting the chloroplast. The segment at 48–114 (AGDTGDAEKP…NDAGNGTPTF (67 aa)) is disordered.

It belongs to the PAP/fibrillin family.

The protein localises to the plastid. It is found in the chloroplast. Its function is as follows. May form together with other plastoglobulins a coat on the surface of the lipoprotein particle. The coat may contain receptors for attachment to the thylakoid membrane as well as regulatory proteins that may function in the transfer of lipids to and from the thylakoid membranes. The sequence is that of Plastoglobulin-1, chloroplastic (PG1) from Pisum sativum (Garden pea).